The following is a 907-amino-acid chain: MPTAAAPIISSVQKLVLYETRARYFLVGSNHAETKYRVLKIDRTEPKDLVVIDDRHVYTQQEVRELLGRLDLGNRTKMSQKGSSGLFRAVSAFGVVGFVRFLEGYYIVLITKRRKMADIGGHAIYKIEDTSMIYIPNDSVRISHPDEARYLRIFQNVDLSSNFYFSYSYDLSHSLQYNLTVLRMPLEMLKSETSKACQESFDIFEDEGLITQGGSGVFGISSEPYMKYVWNGELLDIIKNTVHRDWLLYIIHGFCGQSKLLIYGRPVYVTLIARRSSRFAGTRFLKRGANCEGDVANEVETEQILCDASVMSFTAGSYSSYVQVRGSVPLFWSQDISTMMPKPPITLDQADPFAHVAALHFDQMLQRFGSPIIILNLVKEREKRKHERILSEELVAAVTYLNQFLPPEHTIVYIPWDMAKYTKSKLCNVLDRLNVIAESVVKKTGFFVNRPDSYCSILRPDEKWNELGGHVIPTGRLQTGILRTNCVDCLDRTNTAQFMVGKCALAYQLYSLGLIDKPNLQFDTDAVRLFEELYEDHGDTLSLQYGGSQLVHRVKTYRKIAPWTQHSKDIMQTLSRYYSNAFSDADRQDSINLFLGVFHPTEGKPHLWELPTDFYLHHKNTMSLLPPRRSYTYWWTPEVVKHLPLPYDEVICAANLKKLMVKKFHRWEEEIDIHNEFFRPYELSSFDDTFCLAMTSSARDFMPKTVGIDPSPFTVRKPDETGKSVLGNKNTREEAVLQRKTAASAPPPPSEEAVSSSSEDDSGTDREDEGSISQRSTPVKMTDTGDSAKATENVVQPMKEVYGVSLSSSLSEEDHSIYARFVQLGQSQHKQDRGNQQLCSRCSDGVIKLTPISAFSQDNIYEVQPPRVDRKSTEIFQAHIQASQGIMQPLGKEDTAMYREYIRNRYL.

The SAC domain occupies 154–547; that stretch reads FQNVDLSSNF…GDTLSLQYGG (394 aa). The disordered stretch occupies residues 707–790; the sequence is GIDPSPFTVR…MTDTGDSAKA (84 aa). A compositionally biased stretch (acidic residues) spans 758–770; it reads SEDDSGTDREDEG.

As to quaternary structure, component of the PI(3,5)P2 regulatory complex/PAS complex, at least composed of PIKFYVE, FIG4 and VAC14. VAC14 nucleates the assembly of the complex and serves as a scaffold by pentamerizing into a star-shaped structure, which can bind a single copy each of PIKFYVE and FIG4 and coordinates their activities. In terms of tissue distribution, wide-spread.

It is found in the endosome membrane. It carries out the reaction a 1,2-diacyl-sn-glycero-3-phospho-(1D-myo-inositol-3,5-bisphosphate) + H2O = a 1,2-diacyl-sn-glycero-3-phospho-(1D-myo-inositol-3-phosphate) + phosphate. The catalysed reaction is a 1,2-diacyl-sn-glycero-3-phospho-(1D-myo-inositol-4,5-bisphosphate) + H2O = a 1,2-diacyl-sn-glycero-3-phospho-(1D-myo-inositol 4-phosphate) + phosphate. It catalyses the reaction a 1,2-diacyl-sn-glycero-3-phospho-(1D-myo-inositol-3,4,5-trisphosphate) + H2O = a 1,2-diacyl-sn-glycero-3-phospho-(1D-myo-inositol-3,4-bisphosphate) + phosphate. The enzyme catalyses O-phospho-L-seryl-[protein] + H2O = L-seryl-[protein] + phosphate. Functionally, the PI(3,5)P2 regulatory complex regulates both the synthesis and turnover of phosphatidylinositol 3,5-bisphosphate (PtdIns(3,5)P2). In vitro, hydrolyzes all three D5-phosphorylated polyphosphoinositide substrates in the order PtdIns(4,5)P2 &gt; PtdIns(3,5)P2 &gt; PtdIns(3,4,5)P3. Plays a role in the biogenesis of endosome carrier vesicles (ECV) / multivesicular bodies (MVB) transport intermediates from early endosomes. In terms of biological role, dual specificity phosphatase component of the PI(3,5)P2 regulatory complex which regulates both the synthesis and turnover of phosphatidylinositol 3,5-bisphosphate (PtdIns(3,5)P2). Catalyzes the dephosphorylation of phosphatidylinositol 3,5-bisphosphate (PtdIns(3,5)P2) to form phosphatidylinositol 3-phosphate. Has serine-protein phosphatase activity acting on PIKfyve to stimulate its lipid kinase activity, its catalytically activity being required for maximal PI(3,5)P2 production. In vitro, hydrolyzes all three D5-phosphorylated polyphosphoinositide and although displaying preferences for PtdIns(3,5)P2, it is capable of hydrolyzing PtdIns(3,4,5)P3 and PtdIns(4,5)P2, at least in vitro. In Mus musculus (Mouse), this protein is Polyphosphoinositide phosphatase (Fig4).